The sequence spans 406 residues: RILP-like protein 1 (406 aa).

Ser7 is modified (phosphoserine). In terms of domain architecture, RH1 spans 10 to 97; it reads AALSALEKNV…RVERMDRIEK (88 aa). The residue at position 47 (Cys47) is an S-nitrosocysteine. The stretch at 76-258 forms a coiled coil; it reads ELDELRLELD…KLRERLQGEH (183 aa). 2 disordered regions span residues 255–280 and 330–354; these read QGEHSQNGEEEEAEIQPQPDGEESIS and EIEEENRIPQPPPITHPRTSPQPES. Position 259 is a phosphoserine (Ser259). The segment covering 262 to 280 has biased composition (acidic residues); that stretch reads GEEEEAEIQPQPDGEESIS. One can recognise an RH2 domain in the interval 294–359; sequence RPRFTLQELR…PQPESGIKRL (66 aa).

This sequence belongs to the RILPL family. In terms of assembly, interacts (when S-nitrosylated) with GAPDH. Interacts with RAB8A; interaction is dependent on the phosphorylation of 'Thr-72' of RAB8A. Interacts with RAB10 and RAB12; the interaction is dependent on the phosphorylation of 'Thr-73' of RAB10, and 'Ser-105' of RAB12. S-nitrosylation is required for the interaction with GAPDH.

The protein resides in the cytoplasm. It is found in the cytosol. It localises to the cell projection. The protein localises to the cilium. Its subcellular location is the cytoskeleton. The protein resides in the microtubule organizing center. It is found in the centrosome. It localises to the centriole. Neuroprotective protein, which acts by sequestring GAPDH in the cytosol and prevent the apoptotic function of GAPDH in the nucleus. Competes with SIAH1 for binding GAPDH. Does not regulate lysosomal morphology and distribution. Plays a role in the regulation of cell shape and polarity. Plays a role in cellular protein transport, including protein transport away from primary cilia. Binds to RAB10 following LRRK2-mediated RAB10 phosphorylation which leads to inhibition of ciliogenesis. The chain is RILP-like protein 1 (Rilpl1) from Mus musculus (Mouse).